The chain runs to 411 residues: Mannan endo-1,4-beta-mannosidase 1 (411 aa).

An N-terminal signal peptide occupies residues 1-17 (MLNILPFFLFFLPFLIG). Asn-33 carries N-linked (GlcNAc...) asparagine glycosylation. Residues Trp-87 and Asn-197 each contribute to the substrate site. The active-site Proton donor is the Glu-198. N-linked (GlcNAc...) asparagine glycosylation is present at Asn-202. Tyr-277 is a substrate binding site. The active-site Nucleophile is the Glu-319. Trp-361 contributes to the substrate binding site. N-linked (GlcNAc...) asparagine glycans are attached at residues Asn-366 and Asn-384.

This sequence belongs to the glycosyl hydrolase 5 (cellulase A) family. As to expression, expressed in roots, stems and flowers.

It localises to the secreted. The catalysed reaction is Random hydrolysis of (1-&gt;4)-beta-D-mannosidic linkages in mannans, galactomannans and glucomannans.. The polypeptide is Mannan endo-1,4-beta-mannosidase 1 (MAN1) (Arabidopsis thaliana (Mouse-ear cress)).